Reading from the N-terminus, the 288-residue chain is Acetyl-coenzyme A carboxylase carboxyl transferase subunit beta (288 aa).

The CoA carboxyltransferase N-terminal domain occupies 34–288; it reads LFAKCPACKH…HLVAFHGGVS (255 aa). Zn(2+) contacts are provided by cysteine 38, cysteine 41, cysteine 56, and cysteine 59. A C4-type zinc finger spans residues 38-59; sequence CPACKHMIYQKDLGPAKICPTC.

It belongs to the AccD/PCCB family. In terms of assembly, acetyl-CoA carboxylase is a heterohexamer composed of biotin carboxyl carrier protein (AccB), biotin carboxylase (AccC) and two subunits each of ACCase subunit alpha (AccA) and ACCase subunit beta (AccD). It depends on Zn(2+) as a cofactor.

Its subcellular location is the cytoplasm. It catalyses the reaction N(6)-carboxybiotinyl-L-lysyl-[protein] + acetyl-CoA = N(6)-biotinyl-L-lysyl-[protein] + malonyl-CoA. Its pathway is lipid metabolism; malonyl-CoA biosynthesis; malonyl-CoA from acetyl-CoA: step 1/1. Component of the acetyl coenzyme A carboxylase (ACC) complex. Biotin carboxylase (BC) catalyzes the carboxylation of biotin on its carrier protein (BCCP) and then the CO(2) group is transferred by the transcarboxylase to acetyl-CoA to form malonyl-CoA. This is Acetyl-coenzyme A carboxylase carboxyl transferase subunit beta from Streptococcus equi subsp. zooepidemicus (strain H70).